The chain runs to 199 residues: dITP/XTP pyrophosphatase (199 aa).

A substrate-binding site is contributed by 8–13 (SGNAGK). Residue Asp-69 is the Proton acceptor of the active site. Mg(2+) is bound at residue Asp-69. Substrate is bound by residues Ser-70, 154–157 (FGYN), Lys-177, and 182–183 (HR).

This sequence belongs to the HAM1 NTPase family. In terms of assembly, homodimer. The cofactor is Mg(2+).

It catalyses the reaction XTP + H2O = XMP + diphosphate + H(+). The catalysed reaction is dITP + H2O = dIMP + diphosphate + H(+). It carries out the reaction ITP + H2O = IMP + diphosphate + H(+). Its function is as follows. Pyrophosphatase that catalyzes the hydrolysis of nucleoside triphosphates to their monophosphate derivatives, with a high preference for the non-canonical purine nucleotides XTP (xanthosine triphosphate), dITP (deoxyinosine triphosphate) and ITP. Seems to function as a house-cleaning enzyme that removes non-canonical purine nucleotides from the nucleotide pool, thus preventing their incorporation into DNA/RNA and avoiding chromosomal lesions. The chain is dITP/XTP pyrophosphatase from Xanthomonas oryzae pv. oryzae (strain KACC10331 / KXO85).